The chain runs to 469 residues: Mitochondrial-processing peptidase subunit beta (469 aa).

His78 contacts Zn(2+). Residue Glu81 is the Proton acceptor of the active site. Zn(2+)-binding residues include His82 and Glu159.

Belongs to the peptidase M16 family. In terms of assembly, heterodimer of alpha and beta subunits, forming the mitochondrial processing protease (MPP) in which subunit alpha is involved in substrate recognition and binding and subunit beta is the catalytic subunit. mppB is probably also part of the cytochrome bc1 complex as a core I protein in the mitochondrial inner membrane. Zn(2+) serves as cofactor.

The protein resides in the mitochondrion inner membrane. The protein localises to the mitochondrion matrix. The catalysed reaction is Release of N-terminal transit peptides from precursor proteins imported into the mitochondrion, typically with Arg in position P2.. With respect to regulation, binding to alpha subunit is required for catalytic activity. Functionally, catalytic subunit of the essential mitochondrial processing protease (MPP), which cleaves the mitochondrial sequence off newly imported precursors proteins. Preferentially, cleaves after an arginine at position P2. Plays an essential role in mitochondrial biogenesis. The chain is Mitochondrial-processing peptidase subunit beta (mppB) from Dictyostelium discoideum (Social amoeba).